We begin with the raw amino-acid sequence, 649 residues long: ABC transporter G family member 5 (649 aa).

The region spanning 42–284 is the ABC transporter domain; sequence VKTEEESLKL…LRSNGLHPPL (243 aa). 80–87 serves as a coordination point for ATP; the sequence is GPSGAGKS. The tract at residues 308-336 is disordered; sequence SRRAAHVLTPQTTLQEKRSEDSQGESKSG. The ABC transmembrane type-2 domain occupies 371 to 581; it reads EETMILTHRF…PFEGFLINEF (211 aa). Helical transmembrane passes span 390 to 410, 425 to 445, 474 to 494, 506 to 526, 529 to 549, and 617 to 637; these read LFAC…LIFH, LFAF…PIFL, LPFL…LVGL, LLIW…SALV, FIVG…FSGY, and VVIM…ILRC.

Belongs to the ABC transporter superfamily. ABCG family. Eye pigment precursor importer (TC 3.A.1.204) subfamily.

The protein localises to the membrane. The protein is ABC transporter G family member 5 (ABCG5) of Arabidopsis thaliana (Mouse-ear cress).